The primary structure comprises 331 residues: 2-isopropylmalate synthase (331 aa).

The region spanning arginine 1–tyrosine 80 is the Pyruvate carboxyltransferase domain. The Mn(2+) site is built by histidine 15, histidine 17, and asparagine 51. Positions glutamine 205–valine 331 are regulatory domain.

It belongs to the alpha-IPM synthase/homocitrate synthase family. LeuA type 1 subfamily. As to quaternary structure, homotetramer. It depends on Mn(2+) as a cofactor.

Its subcellular location is the cytoplasm. The enzyme catalyses 3-methyl-2-oxobutanoate + acetyl-CoA + H2O = (2S)-2-isopropylmalate + CoA + H(+). It functions in the pathway amino-acid biosynthesis; L-leucine biosynthesis; L-leucine from 3-methyl-2-oxobutanoate: step 1/4. In terms of biological role, catalyzes the condensation of the acetyl group of acetyl-CoA with 3-methyl-2-oxobutanoate (2-oxoisovalerate) to form 3-carboxy-3-hydroxy-4-methylpentanoate (2-isopropylmalate). The polypeptide is 2-isopropylmalate synthase (Thermus thermophilus).